The following is a 498-amino-acid chain: ATP synthase subunit beta, chloroplastic (498 aa).

172 to 179 (GGAGVGKT) is a binding site for ATP.

Belongs to the ATPase alpha/beta chains family. As to quaternary structure, F-type ATPases have 2 components, CF(1) - the catalytic core - and CF(0) - the membrane proton channel. CF(1) has five subunits: alpha(3), beta(3), gamma(1), delta(1), epsilon(1). CF(0) has four main subunits: a(1), b(1), b'(1) and c(9-12).

The protein resides in the plastid. It is found in the chloroplast thylakoid membrane. It catalyses the reaction ATP + H2O + 4 H(+)(in) = ADP + phosphate + 5 H(+)(out). In terms of biological role, produces ATP from ADP in the presence of a proton gradient across the membrane. The catalytic sites are hosted primarily by the beta subunits. This Cinnamomum camphora (Camphor tree) protein is ATP synthase subunit beta, chloroplastic.